A 424-amino-acid polypeptide reads, in one-letter code: UDP-N-acetylglucosamine 1-carboxyvinyltransferase (424 aa).

22–23 (KN) is a binding site for phosphoenolpyruvate. R98 is a UDP-N-acetyl-alpha-D-glucosamine binding site. The active-site Proton donor is C122. 2-(S-cysteinyl)pyruvic acid O-phosphothioketal is present on C122. Residues 127 to 131 (RPVDQ), D312, and I334 each bind UDP-N-acetyl-alpha-D-glucosamine.

Belongs to the EPSP synthase family. MurA subfamily.

The protein resides in the cytoplasm. The enzyme catalyses phosphoenolpyruvate + UDP-N-acetyl-alpha-D-glucosamine = UDP-N-acetyl-3-O-(1-carboxyvinyl)-alpha-D-glucosamine + phosphate. It functions in the pathway cell wall biogenesis; peptidoglycan biosynthesis. Its function is as follows. Cell wall formation. Adds enolpyruvyl to UDP-N-acetylglucosamine. This is UDP-N-acetylglucosamine 1-carboxyvinyltransferase from Xanthomonas euvesicatoria pv. vesicatoria (strain 85-10) (Xanthomonas campestris pv. vesicatoria).